Consider the following 593-residue polypeptide: Glutamate decarboxylase 1 (593 aa).

Over residues 1-12 the composition is skewed to low complexity; that stretch reads MASSTPSPATSS. Residues 1-22 are disordered; that stretch reads MASSTPSPATSSNAGADPNTTN. Phosphoserine is present on S77. 189–191 is a 4-aminobutanoate binding site; the sequence is QLS. K404 carries the N6-(pyridoxal phosphate)lysine modification. 4-aminobutanoate is bound at residue R566.

Belongs to the group II decarboxylase family. In terms of assembly, homodimer. Pyridoxal 5'-phosphate is required as a cofactor.

It catalyses the reaction L-glutamate + H(+) = 4-aminobutanoate + CO2. Catalyzes the synthesis of the inhibitory neurotransmitter gamma-aminobutyric acid (GABA) with pyridoxal 5'-phosphate as cofactor. The sequence is that of Glutamate decarboxylase 1 (Gad1) from Mus musculus (Mouse).